A 319-amino-acid chain; its full sequence is HPr kinase/phosphorylase (319 aa).

Residues histidine 144 and lysine 165 contribute to the active site. 159–166 (GKSGIGKS) provides a ligand contact to ATP. Serine 166 contacts Mg(2+). Catalysis depends on aspartate 183, which acts as the Proton acceptor; for phosphorylation activity. Proton donor; for dephosphorylation activity. The interval 207–216 (MEIRGLGVIN) is important for the catalytic mechanism of both phosphorylation and dephosphorylation. Glutamate 208 contacts Mg(2+). Arginine 249 is an active-site residue. The segment at 270–275 (PVRPGR) is important for the catalytic mechanism of dephosphorylation.

Belongs to the HPrK/P family. In terms of assembly, homohexamer. It depends on Mg(2+) as a cofactor.

The enzyme catalyses [HPr protein]-L-serine + ATP = [HPr protein]-O-phospho-L-serine + ADP + H(+). It carries out the reaction [HPr protein]-O-phospho-L-serine + phosphate + H(+) = [HPr protein]-L-serine + diphosphate. Functionally, catalyzes the ATP- as well as the pyrophosphate-dependent phosphorylation of a specific serine residue in HPr, a phosphocarrier protein of the phosphoenolpyruvate-dependent sugar phosphotransferase system (PTS). HprK/P also catalyzes the pyrophosphate-producing, inorganic phosphate-dependent dephosphorylation (phosphorolysis) of seryl-phosphorylated HPr (P-Ser-HPr). This is HPr kinase/phosphorylase from Geobacter sulfurreducens (strain ATCC 51573 / DSM 12127 / PCA).